Consider the following 635-residue polypeptide: Biosynthetic arginine decarboxylase (635 aa).

K100 carries the post-translational modification N6-(pyridoxal phosphate)lysine. 282-292 (LDIGGGLGVDY) provides a ligand contact to substrate.

This sequence belongs to the Orn/Lys/Arg decarboxylase class-II family. SpeA subfamily. Requires Mg(2+) as cofactor. It depends on pyridoxal 5'-phosphate as a cofactor.

It carries out the reaction L-arginine + H(+) = agmatine + CO2. It participates in amine and polyamine biosynthesis; agmatine biosynthesis; agmatine from L-arginine: step 1/1. In terms of biological role, catalyzes the biosynthesis of agmatine from arginine. The sequence is that of Biosynthetic arginine decarboxylase from Geobacter sp. (strain M21).